The sequence spans 260 residues: Kallikrein-8 (260 aa).

The signal sequence occupies residues 1-28; sequence MGRPRPRAAKTWMFLLLLGGAWAGHSRA. Positions 29 to 32 are excised as a propeptide; that stretch reads QEDK. The 225-residue stretch at 33–257 folds into the Peptidase S1 domain; sequence VLGGHECQPH…YLDWIKKIIG (225 aa). Cystine bridges form between C39-C173, C58-C74, C145-C246, C152-C218, C184-C198, and C208-C233. The active-site Charge relay system is the H73. The N-linked (GlcNAc...) asparagine glycan is linked to N110. D120 serves as the catalytic Charge relay system. The active-site Charge relay system is the S212.

It belongs to the peptidase S1 family. Kallikrein subfamily. As to quaternary structure, interacts with SPINK9. Isoform 1 is predominantly expressed in the pancreas. Isoform 2 is expressed in adult brain and hippocampus. Isoform 1 and isoform 2 are found in fetal brain and placenta. Detected in salivary gland, uterus, thymus, breast, testis and kidney but not in spleen, liver, lung or normal ovarian tissue. Displays an 11.5-fold increase in Alzheimer disease hippocampus compared to controls and is overexpressed in some ovarian carcinomas. Expressed at low levels in normal skin while high levels are found in psoriasis vulgaris, seborrheic keratosis, lichen planus and squamous cell carcinoma skin samples. Expressed in the keratinocytes.

It is found in the secreted. The protein resides in the cytoplasm. The enzyme catalyses Cleavage of amide substrates following the basic amino acids Arg or Lys at the P1 position, with a preference for Arg over Lys.. Its activity is regulated as follows. Inhibited by a range of serine protease inhibitors including antipain, aprotinin, leupeptin, benzamidine and soybean trypsin inhibitor. Its function is as follows. Serine protease which is capable of degrading a number of proteins such as casein, fibrinogen, kininogen, fibronectin and collagen type IV. Also cleaves L1CAM in response to increased neural activity. Induces neurite outgrowth and fasciculation of cultured hippocampal neurons. Plays a role in the formation and maturation of orphan and small synaptic boutons in the Schaffer-collateral pathway, regulates Schaffer-collateral long-term potentiation in the hippocampus and is required for memory acquisition and synaptic plasticity. Involved in skin desquamation and keratinocyte proliferation. Plays a role in the secondary phase of pathogenesis following spinal cord injury. The sequence is that of Kallikrein-8 (KLK8) from Homo sapiens (Human).